Consider the following 642-residue polypeptide: Serine/threonine-protein kinase pakA (642 aa).

Composition is skewed to polar residues over residues M1–F12 and L38–N48. The disordered stretch occupies residues M1–N82. A CRIB domain is found at I100–G113. Disordered stretches follow at residues G180–E276 and Q317–Q338. Low complexity-rich tracts occupy residues S217–S227 and V254–N266. Residues Y361–M612 form the Protein kinase domain. ATP contacts are provided by residues I367–V375 and K390. Residue D480 is the Proton acceptor of the active site.

The protein belongs to the protein kinase superfamily. STE Ser/Thr protein kinase family. STE20 subfamily.

It localises to the cytoplasm. Its subcellular location is the nucleus. The catalysed reaction is L-seryl-[protein] + ATP = O-phospho-L-seryl-[protein] + ADP + H(+). The enzyme catalyses L-threonyl-[protein] + ATP = O-phospho-L-threonyl-[protein] + ADP + H(+). In terms of biological role, MAP4K component of the MAPK pathway required for the mating pheromone response and the regulation of cell polarity and cell cycle. The protein is Serine/threonine-protein kinase pakA (pakA) of Talaromyces marneffei (Penicillium marneffei).